The primary structure comprises 949 residues: Translation initiation factor IF-2 (949 aa).

3 disordered regions span residues 54–183, 217–288, and 305–357; these read FLKP…EAAP, LPAA…EVAL, and EVVA…EMQA. 2 stretches are compositionally biased toward basic and acidic residues: residues 67 to 92 and 101 to 164; these read DQEK…ERHI and IEAK…EEAA. Low complexity-rich tracts occupy residues 165 to 183 and 217 to 228; these read RAAA…EAAP and LPAAAPAAPSAP. Basic and acidic residues-rich tracts occupy residues 235-288 and 330-339; these read PVEE…EVAL and KYQDNEDRLQ. The tr-type G domain occupies 445-619; that stretch reads TRPPVITVMG…EMLNLQSNPT (175 aa). The segment at 454–461 is G1; that stretch reads GHVDHGKT. 454 to 461 contacts GTP; that stretch reads GHVDHGKT. Residues 479–483 are G2; that stretch reads GITQH. A G3 region spans residues 501-504; that stretch reads DTPG. GTP-binding positions include 501–505 and 555–558; these read DTPGH and NKID. The tract at residues 555–558 is G4; that stretch reads NKID. Residues 591 to 593 form a G5 region; it reads SAK.

The protein belongs to the TRAFAC class translation factor GTPase superfamily. Classic translation factor GTPase family. IF-2 subfamily.

It is found in the cytoplasm. In terms of biological role, one of the essential components for the initiation of protein synthesis. Protects formylmethionyl-tRNA from spontaneous hydrolysis and promotes its binding to the 30S ribosomal subunits. Also involved in the hydrolysis of GTP during the formation of the 70S ribosomal complex. The protein is Translation initiation factor IF-2 of Magnetococcus marinus (strain ATCC BAA-1437 / JCM 17883 / MC-1).